The primary structure comprises 351 residues: Transmembrane protein 255A (351 aa).

4 consecutive transmembrane segments (helical) span residues 30 to 50 (IYVT…GLAA), 57 to 77 (VTVG…LGII), 89 to 109 (LVAS…CAIV), and 226 to 246 (TILN…LGGF). Positions 302-331 (FPSSPPSGLSDEQEPQSPSPSPSYMWSSSA) are disordered.

Belongs to the TMEM255 family.

Its subcellular location is the membrane. This chain is Transmembrane protein 255A (Tmem255a), found in Mus musculus (Mouse).